Reading from the N-terminus, the 584-residue chain is Poly(A) RNA polymerase protein 2 (584 aa).

Positions 1–11 (MGAKSVTASSS) are enriched in polar residues. Disordered regions lie at residues 1–63 (MGAK…LPKD) and 81–147 (EGFD…QELE). The segment covering 12-35 (KKIKNRHNGKVKKSKKIKKVRKPQ) has biased composition (basic residues). Residues 53 to 63 (NEQETNKLPKD) are compositionally biased toward basic and acidic residues. Positions 130-139 (SEDEQAEQEE) are enriched in acidic residues. Mg(2+) contacts are provided by aspartate 236 and aspartate 238. The ATP site is built by glycine 301, lysine 326, asparagine 431, and arginine 435. Residues 371–431 (NLGVLLIEFF…AIQDPGDESN (61 aa)) form the PAP-associated domain. The tract at residues 525-584 (TSTATATTTDDDYEITNPPAKKAKIEEKPESEPAKRNSGETYITVSSEDDDEDGYNPYTL) is disordered. Positions 547–562 (AKIEEKPESEPAKRNS) are enriched in basic and acidic residues.

Belongs to the DNA polymerase type-B-like family. As to quaternary structure, component of the TRAMP complex (also called TRF4 complex) composed of at least HUL4, MTR4, PAP2/TRF4 and either AIR1 or AIR2. Interacts with NOP53 and POL2. Interacts directly with AIR2. The cofactor is Mg(2+). Mn(2+) is required as a cofactor.

It localises to the nucleus. The catalysed reaction is RNA(n) + ATP = RNA(n)-3'-adenine ribonucleotide + diphosphate. In terms of biological role, catalytic subunit of the TRAMP complex which has a poly(A) RNA polymerase activity and is involved in a post-transcriptional quality control mechanism limiting inappropriate expression of genetic information. Polyadenylation is required for the degradative activity of the exosome on several of its nuclear RNA substrates like cryptic transcripts generated by RNA polymerase II and III, or hypomethylated pre-tRNAi-Met. Polyadenylates RNA processing and degradation intermediates of snRNAs, snoRNAs and mRNAs that accumulate in strains lacking a functional exosome. TRF4 is also required for proper nuclear division in mitosis, DNA damage repair and sister chromatid cohesion. Involved in the regulation of histone mRNA levels. May mediate mitotic chromosome condensation. In Saccharomyces cerevisiae (strain ATCC 204508 / S288c) (Baker's yeast), this protein is Poly(A) RNA polymerase protein 2 (PAP2).